Here is a 447-residue protein sequence, read N- to C-terminus: Tubulin beta chain (447 aa).

GTP contacts are provided by Gln11, Glu69, Ser138, Gly142, Thr143, Gly144, Asn204, and Asn226. Glu69 is a binding site for Mg(2+).

Belongs to the tubulin family. As to quaternary structure, dimer of alpha and beta chains. A typical microtubule is a hollow water-filled tube with an outer diameter of 25 nm and an inner diameter of 15 nM. Alpha-beta heterodimers associate head-to-tail to form protofilaments running lengthwise along the microtubule wall with the beta-tubulin subunit facing the microtubule plus end conferring a structural polarity. Microtubules usually have 13 protofilaments but different protofilament numbers can be found in some organisms and specialized cells. Mg(2+) is required as a cofactor.

It is found in the cytoplasm. It localises to the cytoskeleton. In terms of biological role, tubulin is the major constituent of microtubules, a cylinder consisting of laterally associated linear protofilaments composed of alpha- and beta-tubulin heterodimers. Microtubules grow by the addition of GTP-tubulin dimers to the microtubule end, where a stabilizing cap forms. Below the cap, tubulin dimers are in GDP-bound state, owing to GTPase activity of alpha-tubulin. This Penicillium digitatum (Green mold) protein is Tubulin beta chain (TUB2).